We begin with the raw amino-acid sequence, 203 residues long: Histidine biosynthesis bifunctional protein HisIE (203 aa).

Positions 1–114 (MLTEQQRREL…FGDTAHQWLF (114 aa)) are phosphoribosyl-AMP cyclohydrolase. The segment at 115–203 (LYQLEQLLAE…VIENLRKRHQ (89 aa)) is phosphoribosyl-ATP pyrophosphohydrolase.

In the N-terminal section; belongs to the PRA-CH family. The protein in the C-terminal section; belongs to the PRA-PH family.

The protein localises to the cytoplasm. It catalyses the reaction 1-(5-phospho-beta-D-ribosyl)-ATP + H2O = 1-(5-phospho-beta-D-ribosyl)-5'-AMP + diphosphate + H(+). It carries out the reaction 1-(5-phospho-beta-D-ribosyl)-5'-AMP + H2O = 1-(5-phospho-beta-D-ribosyl)-5-[(5-phospho-beta-D-ribosylamino)methylideneamino]imidazole-4-carboxamide. It functions in the pathway amino-acid biosynthesis; L-histidine biosynthesis; L-histidine from 5-phospho-alpha-D-ribose 1-diphosphate: step 2/9. It participates in amino-acid biosynthesis; L-histidine biosynthesis; L-histidine from 5-phospho-alpha-D-ribose 1-diphosphate: step 3/9. This chain is Histidine biosynthesis bifunctional protein HisIE, found in Shigella sonnei (strain Ss046).